A 110-amino-acid chain; its full sequence is Putative UPF0377 protein YIR040C (110 aa).

It belongs to the UPF0377 family.

The chain is Putative UPF0377 protein YIR040C from Saccharomyces cerevisiae (strain ATCC 204508 / S288c) (Baker's yeast).